The sequence spans 225 residues: UPF0758 protein Bpet3149 (225 aa).

One can recognise an MPN domain in the interval 103–225; sequence AMSEPGSVKR…VVSMAELGLL (123 aa). Positions 174, 176, and 187 each coordinate Zn(2+). The short motif at 174 to 187 is the JAMM motif element; it reads HNHPSGSAQPSQAD.

Belongs to the UPF0758 family.

This chain is UPF0758 protein Bpet3149, found in Bordetella petrii (strain ATCC BAA-461 / DSM 12804 / CCUG 43448).